We begin with the raw amino-acid sequence, 347 residues long: NADH-ubiquinone oxidoreductase chain 2 (347 aa).

10 helical membrane-spanning segments follow: residues 3–23 (PIIYTTLIMTVMSGTMLVMIS), 25–45 (HWLLIWIGFEMNLLAMIPVLM), 59–79 (YFLTQATASMMLMMAIIINLL), 89–109 (MFNPVAMTMMTMALAMKLGLS), 149–169 (INPNLMLTMAMLSILIGGWGG), 178–198 (IMAYSSIAHMGWMTAVLPYNT), 200–220 (MTILNLLIYITMTLAMFMLLI), 237–257 (MPVITSLMMVTLLSMGGLPPL), 274–294 (ESIIMPTLMAMTALLNLYFYM), and 325–345 (LLPTMIVLSTLVLPMTPALSS).

It belongs to the complex I subunit 2 family. Core subunit of respiratory chain NADH dehydrogenase (Complex I) which is composed of 45 different subunits. Interacts with TMEM242.

It is found in the mitochondrion inner membrane. It carries out the reaction a ubiquinone + NADH + 5 H(+)(in) = a ubiquinol + NAD(+) + 4 H(+)(out). Its function is as follows. Core subunit of the mitochondrial membrane respiratory chain NADH dehydrogenase (Complex I) which catalyzes electron transfer from NADH through the respiratory chain, using ubiquinone as an electron acceptor. Essential for the catalytic activity and assembly of complex I. The protein is NADH-ubiquinone oxidoreductase chain 2 of Sus scrofa (Pig).